The chain runs to 582 residues: Semenogelin-2 (582 aa).

Positions 1–23 (MKSIILFVLSLLLILEKQAAVMG) are cleaved as a signal peptide. Disordered stretches follow at residues 25-65 (KGGS…SSSI), 91-157 (HKTT…GISS), 171-192 (LSKE…GSQS), 272-366 (NLNQ…KDIQ), and 393-557 (SNQD…HNTV). Residues 50 to 59 (GQKDKQHTES) show a composition bias toward basic and acidic residues. A compositionally biased stretch (basic residues) spans 111-134 (QKGRDHVKPKRHFRLIVIHRKGGQ). 2 stretches are compositionally biased toward polar residues: residues 137–157 (HGTQ…GISS) and 174–192 (EQAS…GSQS). Over residues 293 to 310 (TEERQFNHGEKSVQKDVP) the composition is skewed to basic and acidic residues. The segment covering 325 to 335 (KSQNQVSIPSQ) has biased composition (polar residues). 4 stretches are compositionally biased toward basic and acidic residues: residues 336 to 345 (DQEHGHKENK), 353 to 366 (TEER…KDIQ), 396 to 405 (DQEHGHKENK), and 413 to 426 (TEER…KDIQ). Composition is skewed to polar residues over residues 427–437 (KSVSKGSISIQ) and 445–455 (KSQNQVTIPSQ). Over residues 456 to 465 (DQEHGHKENK) the composition is skewed to basic and acidic residues. Polar residues-rich tracts occupy residues 487–498 (KDVSQSSLSFQT) and 506–529 (SQIQ…NSGK). The span at 530–546 (SADREQDLLSHEQESRY) shows a compositional bias: basic and acidic residues. A compositionally biased stretch (polar residues) spans 547 to 557 (QQKSSGAHNTV).

The protein belongs to the semenogelin family. As to quaternary structure, interacts with SERPINA5.

The protein localises to the secreted. Participates in the formation of a gel matrix (sperm coagulum) entrapping the accessory gland secretions and ejaculated spermatozoa. The sequence is that of Semenogelin-2 (SEMG2) from Colobus guereza (Mantled guereza).